The sequence spans 320 residues: 33 kDa chaperonin (320 aa).

The segment covering 1-17 (MTDASGSERLKRTKDIS) has biased composition (basic and acidic residues). The segment at 1 to 27 (MTDASGSERLKRTKDISESTPPSSLPD) is disordered. Intrachain disulfides connect cysteine 262-cysteine 264 and cysteine 295-cysteine 298.

The protein belongs to the HSP33 family. In terms of processing, under oxidizing conditions two disulfide bonds are formed involving the reactive cysteines. Under reducing conditions zinc is bound to the reactive cysteines and the protein is inactive.

It is found in the cytoplasm. Its function is as follows. Redox regulated molecular chaperone. Protects both thermally unfolding and oxidatively damaged proteins from irreversible aggregation. Plays an important role in the bacterial defense system toward oxidative stress. The sequence is that of 33 kDa chaperonin from Synechococcus sp. (strain JA-3-3Ab) (Cyanobacteria bacterium Yellowstone A-Prime).